The primary structure comprises 430 residues: Enolase (430 aa).

Q163 is a binding site for (2R)-2-phosphoglycerate. E205 acts as the Proton donor in catalysis. Residues D242, E288, and D315 each contribute to the Mg(2+) site. (2R)-2-phosphoglycerate contacts are provided by K340, R369, S370, and K391. The active-site Proton acceptor is K340.

It belongs to the enolase family. Requires Mg(2+) as cofactor.

It localises to the cytoplasm. It is found in the secreted. The protein localises to the cell surface. It catalyses the reaction (2R)-2-phosphoglycerate = phosphoenolpyruvate + H2O. The protein operates within carbohydrate degradation; glycolysis; pyruvate from D-glyceraldehyde 3-phosphate: step 4/5. Catalyzes the reversible conversion of 2-phosphoglycerate (2-PG) into phosphoenolpyruvate (PEP). It is essential for the degradation of carbohydrates via glycolysis. This is Enolase from Phytoplasma australiense.